We begin with the raw amino-acid sequence, 142 residues long: Putative nickel-responsive regulator (142 aa).

Ni(2+)-binding residues include His-77, His-88, His-90, and Cys-96.

It belongs to the transcriptional regulatory CopG/NikR family. In terms of assembly, homotetramer. Ni(2+) serves as cofactor.

Its function is as follows. Transcriptional regulator. This chain is Putative nickel-responsive regulator, found in Halobacterium salinarum (strain ATCC 700922 / JCM 11081 / NRC-1) (Halobacterium halobium).